A 98-amino-acid polypeptide reads, in one-letter code: NADH-ubiquinone oxidoreductase chain 4L (98 aa).

Helical transmembrane passes span 1 to 21 (MAPI…GVLI), 28 to 48 (STLL…TLLI), and 59 to 79 (APLI…ALLV).

This sequence belongs to the complex I subunit 4L family. As to quaternary structure, core subunit of respiratory chain NADH dehydrogenase (Complex I) which is composed of 45 different subunits.

It localises to the mitochondrion inner membrane. The enzyme catalyses a ubiquinone + NADH + 5 H(+)(in) = a ubiquinol + NAD(+) + 4 H(+)(out). Core subunit of the mitochondrial membrane respiratory chain NADH dehydrogenase (Complex I) which catalyzes electron transfer from NADH through the respiratory chain, using ubiquinone as an electron acceptor. Part of the enzyme membrane arm which is embedded in the lipid bilayer and involved in proton translocation. This is NADH-ubiquinone oxidoreductase chain 4L (MT-ND4L) from Perameles gunnii (Eastern barred bandicoot).